The following is a 132-amino-acid chain: Mediator of RNA polymerase II transcription subunit 11 (132 aa).

Belongs to the Mediator complex subunit 11 family. In terms of assembly, component of the Mediator complex.

Its subcellular location is the nucleus. Component of the Mediator complex, a coactivator involved in the regulated transcription of nearly all RNA polymerase II-dependent genes. Mediator functions as a bridge to convey information from gene-specific regulatory proteins to the basal RNA polymerase II transcription machinery. Mediator is recruited to promoters by direct interactions with regulatory proteins and serves as a scaffold for theQ9P086 assembly of a functional pre-initiation complex with RNA polymerase II and the general transcription factors. This is Mediator of RNA polymerase II transcription subunit 11 (MED11) from Aedes aegypti (Yellowfever mosquito).